Reading from the N-terminus, the 467-residue chain is Cysteine--tRNA ligase (467 aa).

Residue cysteine 29 coordinates Zn(2+). The 'HIGH' region signature appears at 31-41 (PTVYNYIHIGN). The Zn(2+) site is built by cysteine 209, histidine 234, and glutamate 238. Residues 266-270 (KMSKS) carry the 'KMSKS' region motif. Position 269 (lysine 269) interacts with ATP. The residue at position 270 (serine 270) is a Phosphoserine.

It belongs to the class-I aminoacyl-tRNA synthetase family. As to quaternary structure, monomer. It depends on Zn(2+) as a cofactor.

The protein localises to the cytoplasm. It carries out the reaction tRNA(Cys) + L-cysteine + ATP = L-cysteinyl-tRNA(Cys) + AMP + diphosphate. The sequence is that of Cysteine--tRNA ligase from Bacillus licheniformis (strain ATCC 14580 / DSM 13 / JCM 2505 / CCUG 7422 / NBRC 12200 / NCIMB 9375 / NCTC 10341 / NRRL NRS-1264 / Gibson 46).